The following is a 367-amino-acid chain: Phosphoribosylaminoimidazole-succinocarboxamide synthase (367 aa).

This sequence belongs to the SAICAR synthetase family.

It catalyses the reaction 5-amino-1-(5-phospho-D-ribosyl)imidazole-4-carboxylate + L-aspartate + ATP = (2S)-2-[5-amino-1-(5-phospho-beta-D-ribosyl)imidazole-4-carboxamido]succinate + ADP + phosphate + 2 H(+). It functions in the pathway purine metabolism; IMP biosynthesis via de novo pathway; 5-amino-1-(5-phospho-D-ribosyl)imidazole-4-carboxamide from 5-amino-1-(5-phospho-D-ribosyl)imidazole-4-carboxylate: step 1/2. The chain is Phosphoribosylaminoimidazole-succinocarboxamide synthase from Vibrio campbellii (strain ATCC BAA-1116).